A 348-amino-acid chain; its full sequence is Rhodopsin (348 aa).

Residue Met1 is modified to N-acetylmethionine. Residues 1–36 lie on the Extracellular side of the membrane; the sequence is MNGTEGPNFYVPFSNKTGVVRSPFEYPQYYLAEPWQ. Residues Asn2 and Asn15 are each glycosylated (N-linked (GlcNAc...) asparagine). Residues 37-61 traverse the membrane as a helical segment; it reads FSMLAAYMFLLIVLGFPINFLTLYV. Topologically, residues 62–73 are cytoplasmic; that stretch reads TVQHKKLRTPLN. Residues 74–96 form a helical membrane-spanning segment; sequence YILLNLAVADLFMVFGGFTTTLY. Residues 97–110 are Extracellular-facing; that stretch reads TSLHGYFVFGPTGC. A disulfide bridge connects residues Cys110 and Cys187. The chain crosses the membrane as a helical span at residues 111-133; the sequence is NVEGFFATLGGEIALWSLVVLAI. The 'Ionic lock' involved in activated form stabilization motif lies at 134–136; it reads ERY. Residues 134-152 are Cytoplasmic-facing; the sequence is ERYVVVCKPMSNFRFGENH. A helical membrane pass occupies residues 153-173; the sequence is AIMGVAFTWVMALACAAPPLA. At 174–202 the chain is on the extracellular side; it reads GWSRYIPEGMQCSCGIDYYTLKPEINNES. Zn(2+) is bound at residue Glu201. Residues 203 to 224 form a helical membrane-spanning segment; it reads FVIYMFVVHFAIPMIVIFFCYG. Residues 225–252 lie on the Cytoplasmic side of the membrane; that stretch reads QLVFTVKEAAAQQQESATTQKAEKEVTR. The chain crosses the membrane as a helical span at residues 253–274; that stretch reads MVIIMVIAFLICWVPYASVAFY. The Extracellular segment spans residues 275 to 286; that stretch reads IFTHQGSDFGPI. Zn(2+) is bound at residue Gln279. The helical transmembrane segment at 287-308 threads the bilayer; the sequence is FMTLPAFFAKSSSIYNPVIYIM. An N6-(retinylidene)lysine modification is found at Lys296. Residues 309–348 are Cytoplasmic-facing; the sequence is MNKQFRNCMITTLCCGKNPLGDDEASASASKTETSQVAPA. 2 S-palmitoyl cysteine lipidation sites follow: Cys322 and Cys323. The interaction with SAG stretch occupies residues 330 to 348; the sequence is DDEASASASKTETSQVAPA. Phosphoserine occurs at positions 334 and 338. Phosphothreonine occurs at positions 340 and 342. At Ser343 the chain carries Phosphoserine.

The protein belongs to the G-protein coupled receptor 1 family. Opsin subfamily. Homodimer. May form a complex composed of RHO, GRK1 and RCVRN in a Ca(2+)-dependent manner; RCVRN prevents the interaction between GRK1 and RHO. Interacts with GRK1. Interacts (phosphorylated form) with SAG. Interacts with GNAT1. Interacts with GNAT3. SAG and G-proteins compete for a common binding site. Interacts with PRCD; the interaction promotes PRCD stability. Forms a complex with ASAP1 and ARF4. Forms a complex with ASAP1, RAB11A, Rabin8/RAB3IP, ARF4 and RAB11FIP3; the complex regulates Golgi-to-cilia rhodopsin/RHO transport in photoreceptors. Phosphorylated on some or all of the serine and threonine residues present in the C-terminal region. In terms of processing, contains one covalently linked retinal chromophore. Upon light absorption, the covalently bound 11-cis-retinal is converted to all-trans-retinal. After hydrolysis of the Schiff base and release of the covalently bound all-trans-retinal, active rhodopsin is regenerated by binding of a fresh molecule of 11-cis-retinal.

It localises to the membrane. The protein localises to the cell projection. The protein resides in the cilium. Its subcellular location is the photoreceptor outer segment. Functionally, photoreceptor required for image-forming vision at low light intensity. Required for photoreceptor cell viability after birth. Light-induced isomerization of 11-cis to all-trans retinal triggers a conformational change that activates signaling via G-proteins. Subsequent receptor phosphorylation mediates displacement of the bound G-protein alpha subunit by the arrestin SAG and terminates signaling. This Canis lupus familiaris (Dog) protein is Rhodopsin (RHO).